The chain runs to 358 residues: Protein ocs (358 aa).

The protein belongs to the lysopine/nopaline/octopine/opine/vitopine dehydrogenases family. In terms of assembly, monomer.

It catalyses the reaction D-octopine + NAD(+) + H2O = L-arginine + pyruvate + NADH + H(+). The catalysed reaction is D-lysopine + NADP(+) + H2O = L-lysine + pyruvate + NADPH + H(+). Its function is as follows. Reductive condensation of pyruvate and arginine, lysine, histidine, or octopine to form octopine, lysopine, histopine, or octopinic acid, respectively. NADPH is the preferred cofactor, but NADH can also be used. The sequence is that of Protein ocs (ocs) from Agrobacterium tumefaciens (strain Ach5).